We begin with the raw amino-acid sequence, 383 residues long: MAWRSCFMKWTQINSINASSLCPKSTRLNIHPQQRCGFRKTERPSESKKGVQETEAEAGGHNRAVPPKPVPPLPPRRPHQLFRPLVFTVGFTGCSFGAAAILQYESVKSRVQLAIEEAKEEKRDTLLEGHDTTYWHNWWNQLSNFQKQVILLISAVDDFWSGLSEGQKTVTGIIALNTVVLCCWRVPAMQRFLVKYFTSNPASKTRCLPMVLSSFSHYSVIHMVVNMYVLWTFSSSIVSLLGREQFLALYLSGGVISTFVSYVFKTATGRLGPSLGASGSIMTVLAAVCTKIPEAKLGIVLLPVISFSAGNALKALVALDIAGLVLGWRFFDHAAHLGGALFGVWYIGYGHELIWRKREPLIKFWHELRNMSPGRPGPGGGGG.

The transit peptide at Met1–Gly37 directs the protein to the mitochondrion. Residues Arg35 to Pro75 form a disordered region. Over Phe38–Arg83 the chain is Mitochondrial matrix. Residues Arg39–Gln52 are compositionally biased toward basic and acidic residues. The segment covering Pro66–Pro75 has biased composition (pro residues). A helical transmembrane segment spans residues Pro84–Tyr104. The Mitochondrial intermembrane portion of the chain corresponds to Glu105–Lys168. The chain crosses the membrane as a helical span at residues Thr169 to Met189. Topologically, residues Gln190–Ser219 are mitochondrial matrix. The helical transmembrane segment at Val220–Leu240 threads the bilayer. Residues Leu241 to Gln245 lie on the Mitochondrial intermembrane side of the membrane. The chain crosses the membrane as a helical span at residues Phe246–Thr266. The Mitochondrial matrix segment spans residues Ala267–Leu271. Residues Gly272–Ile292 form a helical membrane-spanning segment. Catalysis depends on Ser278, which acts as the Nucleophile. Residues Pro293–Gly298 lie on the Mitochondrial intermembrane side of the membrane. The helical transmembrane segment at Ile299–Leu319 threads the bilayer. Residues Asp320–Ala334 are Mitochondrial matrix-facing. Residues Ala335–Trp355 form a helical membrane-spanning segment. Residue His336 is part of the active site. Residues Arg356 to Gly383 are Mitochondrial intermembrane-facing.

Belongs to the peptidase S54 family.

The protein localises to the mitochondrion inner membrane. It catalyses the reaction Cleaves type-1 transmembrane domains using a catalytic dyad composed of serine and histidine that are contributed by different transmembrane domains.. In terms of biological role, required for the control of apoptosis during postnatal growth. Essential for proteolytic processing of an antiapoptotic form of opa1 which prevents the release of mitochondrial cytochrome c in response to intrinsic apoptotic signals. The polypeptide is Presenilin-associated rhomboid-like protein A, mitochondrial (parla) (Danio rerio (Zebrafish)).